Consider the following 98-residue polypeptide: NADH-ubiquinone oxidoreductase chain 4L (98 aa).

3 helical membrane passes run 1-21 (MAPI…GVLI), 28-48 (STLL…TLLI), and 59-79 (APLI…ALLV).

It belongs to the complex I subunit 4L family. As to quaternary structure, core subunit of respiratory chain NADH dehydrogenase (Complex I) which is composed of 45 different subunits.

It is found in the mitochondrion inner membrane. The enzyme catalyses a ubiquinone + NADH + 5 H(+)(in) = a ubiquinol + NAD(+) + 4 H(+)(out). Functionally, core subunit of the mitochondrial membrane respiratory chain NADH dehydrogenase (Complex I) which catalyzes electron transfer from NADH through the respiratory chain, using ubiquinone as an electron acceptor. Part of the enzyme membrane arm which is embedded in the lipid bilayer and involved in proton translocation. This chain is NADH-ubiquinone oxidoreductase chain 4L (MT-ND4L), found in Isoodon macrourus (Short-nosed bandicoot).